We begin with the raw amino-acid sequence, 449 residues long: Glutamate--tRNA ligase 2 (449 aa).

The short motif at 11–21 (PSPTGFLHIGN) is the 'HIGH' region element. The short motif at 242–246 (GLSKR) is the 'KMSKS' region element. An ATP-binding site is contributed by lysine 245.

This sequence belongs to the class-I aminoacyl-tRNA synthetase family. Glutamate--tRNA ligase type 1 subfamily. As to quaternary structure, monomer.

It localises to the cytoplasm. It catalyses the reaction tRNA(Glu) + L-glutamate + ATP = L-glutamyl-tRNA(Glu) + AMP + diphosphate. Catalyzes the attachment of glutamate to tRNA(Glu) in a two-step reaction: glutamate is first activated by ATP to form Glu-AMP and then transferred to the acceptor end of tRNA(Glu). The chain is Glutamate--tRNA ligase 2 from Methylorubrum populi (strain ATCC BAA-705 / NCIMB 13946 / BJ001) (Methylobacterium populi).